Reading from the N-terminus, the 167-residue chain is Phospholipase A2 (167 aa).

Residues Trp-38, Gly-40, and Gly-42 each contribute to the Ca(2+) site. 5 cysteine pairs are disulfide-bonded: Cys-39–Cys-61, Cys-60–Cys-99, Cys-67–Cys-92, Cys-90–Cys-127, and Cys-132–Cys-144. A glycan (N-linked (GlcNAc...) asparagine) is linked at Asn-47. The active site involves His-64. Residue Asp-65 coordinates Ca(2+). Positions 136–140 are excised as a propeptide; the sequence is ARSAR.

This sequence belongs to the phospholipase A2 family. Group III subfamily. As to quaternary structure, heterodimer composed of a large subunit and a small subunit; disulfide-linked. Ca(2+) is required as a cofactor. As to expression, expressed by the venom gland.

The protein resides in the secreted. The enzyme catalyses a 1,2-diacyl-sn-glycero-3-phosphocholine + H2O = a 1-acyl-sn-glycero-3-phosphocholine + a fatty acid + H(+). Functionally, phospholipase toxin, which catalyzes the calcium-dependent hydrolysis of the 2-acyl groups in 3-sn-phosphoglycerides. Inhibits both skeletal (RYR1) and cardiac (RYR2) ryanodine receptors (calcium release channels). Probably blocks ryanodine receptors by generating a lipid product. Shows hemolytic activity, but it is not know if it is direct or indirect. The polypeptide is Phospholipase A2 (Hottentotta tamulus (Eastern Indian scorpion)).